A 212-amino-acid polypeptide reads, in one-letter code: ATP phosphoribosyltransferase 2 (212 aa).

The protein belongs to the ATP phosphoribosyltransferase family. Short subfamily. Heteromultimer composed of HisG and HisZ subunits.

The protein resides in the cytoplasm. The enzyme catalyses 1-(5-phospho-beta-D-ribosyl)-ATP + diphosphate = 5-phospho-alpha-D-ribose 1-diphosphate + ATP. It participates in amino-acid biosynthesis; L-histidine biosynthesis; L-histidine from 5-phospho-alpha-D-ribose 1-diphosphate: step 1/9. In terms of biological role, catalyzes the condensation of ATP and 5-phosphoribose 1-diphosphate to form N'-(5'-phosphoribosyl)-ATP (PR-ATP). Has a crucial role in the pathway because the rate of histidine biosynthesis seems to be controlled primarily by regulation of HisG enzymatic activity. The chain is ATP phosphoribosyltransferase 2 (hisG2) from Geobacter sulfurreducens (strain ATCC 51573 / DSM 12127 / PCA).